A 352-amino-acid chain; its full sequence is Putative [LysW]-L-2-aminoadipate 6-phosphate reductase (352 aa).

Residue 11-14 participates in NADP(+) binding; sequence SGYT. The active site involves cysteine 148. Asparagine 319 contributes to the NADP(+) binding site.

It belongs to the NAGSA dehydrogenase family. Type 1 subfamily. LysY sub-subfamily.

Its subcellular location is the cytoplasm. The catalysed reaction is [amino-group carrier protein]-C-terminal-N-(1-carboxy-5-oxopentan-1-yl)-L-glutamine + phosphate + NADP(+) = [amino-group carrier protein]-C-terminal-N-(1-carboxy-5-phosphooxy-5-oxopentan-1-yl)-L-glutamine + NADPH + H(+). Its pathway is amino-acid biosynthesis; L-lysine biosynthesis via AAA pathway; L-lysine from L-alpha-aminoadipate (Thermus route): step 3/5. In terms of biological role, catalyzes the NADPH-dependent reduction of [LysW]-aminoadipate 6-phosphate to yield [LysW]-aminoadipate 6-semialdehyde. The polypeptide is Putative [LysW]-L-2-aminoadipate 6-phosphate reductase (Thermomicrobium roseum (strain ATCC 27502 / DSM 5159 / P-2)).